We begin with the raw amino-acid sequence, 206 residues long: Putative apoptosis inhibitor 021L (206 aa).

A compositionally biased stretch (polar residues) spans 95 to 105 (TSKSPVSNQPS). The interval 95–114 (TSKSPVSNQPSPEEDEPIPD) is disordered. An RING-type zinc finger spans residues 157 to 195 (CVVCQANVRNVVFVPCNHLATCISCSANPLMPKKCPMCR).

It belongs to the IIV-6 193R family.

Its function is as follows. Plays a role early in infection by preventing host cell apoptosis. The chain is Putative apoptosis inhibitor 021L from Aedes vexans (Inland floodwater mosquito).